A 100-amino-acid polypeptide reads, in one-letter code: Cell division protein FtsB (100 aa).

Topologically, residues 1 to 3 (MKW) are cytoplasmic. A helical membrane pass occupies residues 4 to 21 (LAIILVVALLALQYRLWM). Residues 22-100 (GEGSIASVVS…TDKDTKKNKK (79 aa)) lie on the Periplasmic side of the membrane. Positions 26–73 (IASVVSLNREIAKQKEENARLRERNRLLAAEVDALKQGKDAIEERARN) form a coiled coil.

It belongs to the FtsB family. Part of a complex composed of FtsB, FtsL and FtsQ.

The protein resides in the cell inner membrane. In terms of biological role, essential cell division protein. May link together the upstream cell division proteins, which are predominantly cytoplasmic, with the downstream cell division proteins, which are predominantly periplasmic. The sequence is that of Cell division protein FtsB from Saccharophagus degradans (strain 2-40 / ATCC 43961 / DSM 17024).